We begin with the raw amino-acid sequence, 918 residues long: Isoleucine--tRNA ligase (918 aa).

The short motif at 59-69 is the 'HIGH' region element; that stretch reads PYANGHLHIGH. Glutamate 570 contributes to the L-isoleucyl-5'-AMP binding site. The 'KMSKS' region motif lies at 611 to 615; it reads KMSKS. Position 614 (lysine 614) interacts with ATP. Zn(2+)-binding residues include cysteine 893, cysteine 896, cysteine 908, and cysteine 911.

This sequence belongs to the class-I aminoacyl-tRNA synthetase family. IleS type 1 subfamily. In terms of assembly, monomer. The cofactor is Zn(2+).

It is found in the cytoplasm. The enzyme catalyses tRNA(Ile) + L-isoleucine + ATP = L-isoleucyl-tRNA(Ile) + AMP + diphosphate. In terms of biological role, catalyzes the attachment of isoleucine to tRNA(Ile). As IleRS can inadvertently accommodate and process structurally similar amino acids such as valine, to avoid such errors it has two additional distinct tRNA(Ile)-dependent editing activities. One activity is designated as 'pretransfer' editing and involves the hydrolysis of activated Val-AMP. The other activity is designated 'posttransfer' editing and involves deacylation of mischarged Val-tRNA(Ile). This chain is Isoleucine--tRNA ligase, found in Campylobacter concisus (strain 13826).